The following is a 409-amino-acid chain: Elongation factor Tu, chloroplastic (409 aa).

A tr-type G domain is found at 10–214 (KPHVNIGTIG…KIDEYIPTPE (205 aa)). Residues 19–26 (GHVDHGKT) are G1. A GTP-binding site is contributed by 19 to 26 (GHVDHGKT). Thr-26 is a binding site for Mg(2+). The segment at 60–64 (GITIN) is G2. A G3 region spans residues 81–84 (DCPG). GTP-binding positions include 81–85 (DCPGH) and 136–139 (NKAD). The tract at residues 136–139 (NKAD) is G4. The G5 stretch occupies residues 174 to 176 (SAL).

Belongs to the TRAFAC class translation factor GTPase superfamily. Classic translation factor GTPase family. EF-Tu/EF-1A subfamily.

It localises to the plastid. It is found in the chloroplast. The enzyme catalyses GTP + H2O = GDP + phosphate + H(+). In terms of biological role, GTP hydrolase that promotes the GTP-dependent binding of aminoacyl-tRNA to the A-site of ribosomes during protein biosynthesis. The polypeptide is Elongation factor Tu, chloroplastic (tufA) (Rhodomonas salina (Cryptomonas salina)).